The chain runs to 148 residues: UPF0179 protein Mpal_0949 (148 aa).

The protein belongs to the UPF0179 family.

This Methanosphaerula palustris (strain ATCC BAA-1556 / DSM 19958 / E1-9c) protein is UPF0179 protein Mpal_0949.